A 970-amino-acid chain; its full sequence is Isoleucine--tRNA ligase (970 aa).

The 'HIGH' region signature appears at 65–75 (PYANGHLHIGH). An L-isoleucyl-5'-AMP-binding site is contributed by E608. Positions 649–653 (KMSKS) match the 'KMSKS' region motif. K652 lines the ATP pocket. Residues C943, C946, C962, and C965 each coordinate Zn(2+).

Belongs to the class-I aminoacyl-tRNA synthetase family. IleS type 1 subfamily. Monomer. The cofactor is Zn(2+).

It localises to the cytoplasm. It catalyses the reaction tRNA(Ile) + L-isoleucine + ATP = L-isoleucyl-tRNA(Ile) + AMP + diphosphate. In terms of biological role, catalyzes the attachment of isoleucine to tRNA(Ile). As IleRS can inadvertently accommodate and process structurally similar amino acids such as valine, to avoid such errors it has two additional distinct tRNA(Ile)-dependent editing activities. One activity is designated as 'pretransfer' editing and involves the hydrolysis of activated Val-AMP. The other activity is designated 'posttransfer' editing and involves deacylation of mischarged Val-tRNA(Ile). In Ruegeria pomeroyi (strain ATCC 700808 / DSM 15171 / DSS-3) (Silicibacter pomeroyi), this protein is Isoleucine--tRNA ligase.